Consider the following 104-residue polypeptide: Large ribosomal subunit protein uL24 (104 aa).

The protein belongs to the universal ribosomal protein uL24 family. As to quaternary structure, part of the 50S ribosomal subunit.

In terms of biological role, one of two assembly initiator proteins, it binds directly to the 5'-end of the 23S rRNA, where it nucleates assembly of the 50S subunit. Functionally, one of the proteins that surrounds the polypeptide exit tunnel on the outside of the subunit. In Bartonella henselae (strain ATCC 49882 / DSM 28221 / CCUG 30454 / Houston 1) (Rochalimaea henselae), this protein is Large ribosomal subunit protein uL24.